We begin with the raw amino-acid sequence, 333 residues long: MPPTINMGIPGASSSVTGGVSGKRVLLAEPRGYCAGVDRAVETVERALEKHGAPVYVRHEIVHNRYVVDTLAKAGAVFVEQTDEVPEGAIVVFSAHGVAPTVHVEAAARNLKTIDATCPLVTKVHNEAKRFARDDYDILLVGHEGHEEVVGTAGEAPDHVQVVDNPDAVDKVTVRDPDKVIWLSQTTLSVDETMETVRRLREKFPTLQDPPSDDICYATQNRQVAVKAMAPECELVIVVGSKNSSNSVRLVEVALGAGSDAAHLVDYAEDIDPTWLNGVTTVGVTSGASVPEVLVRGVLDRLAEYGYGTVQPVTTANETLVFALPREIRPARS.

Cysteine 34 serves as a coordination point for [4Fe-4S] cluster. (2E)-4-hydroxy-3-methylbut-2-enyl diphosphate contacts are provided by histidine 63 and histidine 96. Residues histidine 63 and histidine 96 each contribute to the dimethylallyl diphosphate site. Isopentenyl diphosphate is bound by residues histidine 63 and histidine 96. Cysteine 118 contributes to the [4Fe-4S] cluster binding site. Residue histidine 146 participates in (2E)-4-hydroxy-3-methylbut-2-enyl diphosphate binding. Dimethylallyl diphosphate is bound at residue histidine 146. Histidine 146 contacts isopentenyl diphosphate. Catalysis depends on glutamate 148, which acts as the Proton donor. Threonine 186 provides a ligand contact to (2E)-4-hydroxy-3-methylbut-2-enyl diphosphate. [4Fe-4S] cluster is bound at residue cysteine 216. Residues serine 244, serine 245, asparagine 246, and serine 289 each coordinate (2E)-4-hydroxy-3-methylbut-2-enyl diphosphate. Residues serine 244, serine 245, asparagine 246, and serine 289 each coordinate dimethylallyl diphosphate. Positions 244, 245, 246, and 289 each coordinate isopentenyl diphosphate.

This sequence belongs to the IspH family. The cofactor is [4Fe-4S] cluster.

It carries out the reaction isopentenyl diphosphate + 2 oxidized [2Fe-2S]-[ferredoxin] + H2O = (2E)-4-hydroxy-3-methylbut-2-enyl diphosphate + 2 reduced [2Fe-2S]-[ferredoxin] + 2 H(+). The catalysed reaction is dimethylallyl diphosphate + 2 oxidized [2Fe-2S]-[ferredoxin] + H2O = (2E)-4-hydroxy-3-methylbut-2-enyl diphosphate + 2 reduced [2Fe-2S]-[ferredoxin] + 2 H(+). It functions in the pathway isoprenoid biosynthesis; dimethylallyl diphosphate biosynthesis; dimethylallyl diphosphate from (2E)-4-hydroxy-3-methylbutenyl diphosphate: step 1/1. Its pathway is isoprenoid biosynthesis; isopentenyl diphosphate biosynthesis via DXP pathway; isopentenyl diphosphate from 1-deoxy-D-xylulose 5-phosphate: step 6/6. Catalyzes the conversion of 1-hydroxy-2-methyl-2-(E)-butenyl 4-diphosphate (HMBPP) into a mixture of isopentenyl diphosphate (IPP) and dimethylallyl diphosphate (DMAPP). Acts in the terminal step of the DOXP/MEP pathway for isoprenoid precursor biosynthesis. The polypeptide is 4-hydroxy-3-methylbut-2-enyl diphosphate reductase (Mycobacterium sp. (strain KMS)).